We begin with the raw amino-acid sequence, 102 residues long: Glutaredoxin-C13 (102 aa).

In terms of domain architecture, Glutaredoxin spans 1–101 (MDKVMRMSSE…PLIKPYQSIL (101 aa)). Cysteines 21 and 24 form a disulfide.

Belongs to the glutaredoxin family. CC-type subfamily.

The protein resides in the cytoplasm. Its function is as follows. Has a glutathione-disulfide oxidoreductase activity in the presence of NADPH and glutathione reductase. Reduces low molecular weight disulfides and proteins. This Arabidopsis thaliana (Mouse-ear cress) protein is Glutaredoxin-C13 (GRXC13).